A 2493-amino-acid chain; its full sequence is Adenylate cyclase (2493 aa).

Composition is skewed to polar residues over residues 1–18 (MLFT…SPEQ), 42–51 (RDSNGSSNFT), 60–78 (SQQY…QPDI), 129–147 (PANS…SISP), and 197–210 (APFS…TSVN). 9 disordered regions span residues 1–85 (MLFT…SSTL), 99–148 (FEHA…ISPS), 197–325 (APFS…SSLS), 355–444 (NSPS…QSQS), 475–565 (GSIT…VNML), 616–660 (QAPV…KTSY), 753–832 (NVGE…GSKS), 854–882 (ALVQ…GAGA), and 904–967 (RPSK…ATGT). Over residues 211-233 (PSAASTASPSTSAATRTRPRGGT) the composition is skewed to low complexity. Composition is skewed to polar residues over residues 234–246 (NASQ…TSFG) and 253–264 (LSSSRSQYSLRP). 2 stretches are compositionally biased toward basic residues: residues 287 to 303 (AVKK…KKSS) and 404 to 422 (HLKK…HLAK). Positions 425–434 (KPGEDADSAR) are enriched in basic and acidic residues. Over residues 500 to 525 (PSPSQTPIAERQTSVTSTVESPSHAS) the composition is skewed to polar residues. The segment covering 534–555 (SLRTPSRTTASTSTSSASTVLS) has biased composition (low complexity). Positions 630–640 (TDSELSDRKDS) are enriched in basic and acidic residues. The segment covering 641 to 660 (VVSTHSMRSNHSGISPKTSY) has biased composition (polar residues). Residues 754–763 (VGEEEDDDDD) show a composition bias toward acidic residues. Low complexity-rich tracts occupy residues 780–791 (SSSGISSTHASS) and 854–870 (ALVQ…QPSP). The segment covering 913 to 935 (RPNTAGSVGATRPSTTTLGSTLS) has biased composition (polar residues). The region spanning 970–1072 (RNHFIRVYKT…LRFVFRPDSV (103 aa)) is the Ras-associating domain. 22 LRR repeats span residues 1086-1107 (TFQH…LYKH), 1110-1132 (WIVS…VQLC), 1134-1155 (SLRT…VRHS), 1157-1178 (TLTH…SLDL), 1181-1202 (ELMS…FSSI), 1204-1225 (TLRN…ICDV), 1227-1248 (SLVD…IANL), 1250-1271 (NLER…MSEL), 1273-1294 (SLRT…LGLP), 1295-1316 (RLQN…LGPQ), 1317-1336 (LTQV…AALT), 1339-1360 (DLTS…LFPQ), 1363-1385 (ALVK…GDLK), 1386-1407 (RLEM…IGDL), 1409-1430 (ALKE…LWLC), 1432-1453 (SLAH…PDIR), 1511-1534 (SLQK…SELT), 1535-1556 (SLEV…SLQT), 1559-1580 (KLRE…DLVV), 1583-1605 (ELRI…GKLK), 1606-1628 (KLAN…HYDW), and 1635-1654 (ELRY…TKLS). The region spanning 1710-2000 (AYGIADALGK…ESIMVMVISV (291 aa)) is the PPM-type phosphatase domain. The 137-residue stretch at 2058–2194 (ALVFTDIKNS…PMVNRAARIS (137 aa)) folds into the Guanylate cyclase domain. 2 residues coordinate Mg(2+): aspartate 2063 and aspartate 2105. Disordered regions lie at residues 2220-2241 (DESS…TEEE), 2354-2378 (EADR…HGTA), and 2467-2493 (PPRA…ELVP). Residues 2470 to 2485 (ASTSALSLPSPRTSPR) are compositionally biased toward polar residues.

The protein belongs to the adenylyl cyclase class-3 family. It depends on Mg(2+) as a cofactor.

The enzyme catalyses ATP = 3',5'-cyclic AMP + diphosphate. Plays essential roles in regulation of cellular metabolism by catalyzing the synthesis of a second messenger, cAMP. The sequence is that of Adenylate cyclase (UAC1) from Mycosarcoma maydis (Corn smut fungus).